A 233-amino-acid polypeptide reads, in one-letter code: 5'-methylthioadenosine/S-adenosylhomocysteine nucleosidase (233 aa).

Catalysis depends on Glu-12, which acts as the Proton acceptor. Substrate contacts are provided by residues Gly-78, Ile-152, and 173 to 174 (ME). Asp-197 functions as the Proton donor in the catalytic mechanism.

It belongs to the PNP/UDP phosphorylase family. MtnN subfamily. Homodimer.

It catalyses the reaction S-adenosyl-L-homocysteine + H2O = S-(5-deoxy-D-ribos-5-yl)-L-homocysteine + adenine. The catalysed reaction is S-methyl-5'-thioadenosine + H2O = 5-(methylsulfanyl)-D-ribose + adenine. The enzyme catalyses 5'-deoxyadenosine + H2O = 5-deoxy-D-ribose + adenine. Its pathway is amino-acid biosynthesis; L-methionine biosynthesis via salvage pathway; S-methyl-5-thio-alpha-D-ribose 1-phosphate from S-methyl-5'-thioadenosine (hydrolase route): step 1/2. Its function is as follows. Catalyzes the irreversible cleavage of the glycosidic bond in both 5'-methylthioadenosine (MTA) and S-adenosylhomocysteine (SAH/AdoHcy) to adenine and the corresponding thioribose, 5'-methylthioribose and S-ribosylhomocysteine, respectively. Also cleaves 5'-deoxyadenosine, a toxic by-product of radical S-adenosylmethionine (SAM) enzymes, into 5-deoxyribose and adenine. Thus, is required for in vivo function of the radical SAM enzymes biotin synthase and lipoic acid synthase, that are inhibited by 5'-deoxyadenosine accumulation. This is 5'-methylthioadenosine/S-adenosylhomocysteine nucleosidase from Yersinia pestis bv. Antiqua (strain Antiqua).